A 42-amino-acid chain; its full sequence is Daisho1 (42 aa).

The first 20 residues, 1–20 (MKFFQAAALLLAMFAALANA), serve as a signal peptide directing secretion. Positions 21-26 (EPVPQP) are cleaved as a propeptide — removed by a dipeptidylpeptidase. Thr41 is subject to Threonine amide.

Hemolymph (at protein level).

It localises to the secreted. Functionally, peptide which plays a role in the humoral immune response to a subset of filamentous fungi, including F.oxysporum and F.verticillioides. The sequence is that of Daisho1 from Drosophila melanogaster (Fruit fly).